The chain runs to 484 residues: Aspartyl/glutamyl-tRNA(Asn/Gln) amidotransferase subunit B (484 aa).

Belongs to the GatB/GatE family. GatB subfamily. In terms of assembly, heterotrimer of A, B and C subunits.

The catalysed reaction is L-glutamyl-tRNA(Gln) + L-glutamine + ATP + H2O = L-glutaminyl-tRNA(Gln) + L-glutamate + ADP + phosphate + H(+). It carries out the reaction L-aspartyl-tRNA(Asn) + L-glutamine + ATP + H2O = L-asparaginyl-tRNA(Asn) + L-glutamate + ADP + phosphate + 2 H(+). Allows the formation of correctly charged Asn-tRNA(Asn) or Gln-tRNA(Gln) through the transamidation of misacylated Asp-tRNA(Asn) or Glu-tRNA(Gln) in organisms which lack either or both of asparaginyl-tRNA or glutaminyl-tRNA synthetases. The reaction takes place in the presence of glutamine and ATP through an activated phospho-Asp-tRNA(Asn) or phospho-Glu-tRNA(Gln). The polypeptide is Aspartyl/glutamyl-tRNA(Asn/Gln) amidotransferase subunit B (Bordetella parapertussis (strain 12822 / ATCC BAA-587 / NCTC 13253)).